The sequence spans 89 residues: Small ribosomal subunit protein uS15 (89 aa).

This sequence belongs to the universal ribosomal protein uS15 family. In terms of assembly, part of the 30S ribosomal subunit. Forms a bridge to the 50S subunit in the 70S ribosome, contacting the 23S rRNA.

Its function is as follows. One of the primary rRNA binding proteins, it binds directly to 16S rRNA where it helps nucleate assembly of the platform of the 30S subunit by binding and bridging several RNA helices of the 16S rRNA. In terms of biological role, forms an intersubunit bridge (bridge B4) with the 23S rRNA of the 50S subunit in the ribosome. The chain is Small ribosomal subunit protein uS15 from Nocardia farcinica (strain IFM 10152).